The following is a 458-amino-acid chain: MVQISEVKGNKRDNRTAAHTHIKGLGLKSDGYAEKQAAGFVGQAAARESCGVVVDLIRAQKMAGRGVLLAGGPGTGKTALALAISQELGTKIPFCPIVGSEIYSAEVKKTEMLMENFRRAIGLKVRETKEVYEGEVTELTPEEAENPLGGYGKTISTLLIGLKSAKGQKKLRLDPSIYEAIQKERVTVGDVIYIEANTGACKRVGRSDAYATEFDLEAEEYVPIPKGEVHKKKEIVQDVSLHDLDVANSRPQGGQDIMSMMGQLMKPKMTEITDKLRGEINKVVSKYIDQGVAELVPGVLFIDEAHMLDVECFTYLNRALESPIAPIVVLASNRGMCTIRGTDDIVAAHGIPSDFLARMLIIPTTPYEADEIKRIVRIRSTTEGVSVSDAAIDKISEHGVRISLRYCLQLLTPASILAKANGRSQIDVQDVAECEDLFLDASRSAALLSSEAGRGYLA.

An ATP-binding site is contributed by 71-78 (GGPGTGKT).

Belongs to the RuvB family. May form heterododecamers with RVB2. Component of the SWR1 chromatin remodeling complex, the INO80 chromatin remodeling complex, and of the R2TP complex.

The protein localises to the nucleus. The enzyme catalyses ATP + H2O = ADP + phosphate + H(+). Its function is as follows. DNA helicase which participates in several chromatin remodeling complexes, including the SWR1 and the INO80 complexes. The SWR1 complex mediates the ATP-dependent exchange of histone H2A for the H2A variant HZT1 leading to transcriptional regulation of selected genes by chromatin remodeling. The INO80 complex remodels chromatin by shifting nucleosomes and is involved in DNA repair. Also involved in pre-rRNA processing. The sequence is that of RuvB-like helicase 1 (RVB1) from Gibberella zeae (strain ATCC MYA-4620 / CBS 123657 / FGSC 9075 / NRRL 31084 / PH-1) (Wheat head blight fungus).